A 1081-amino-acid chain; its full sequence is Protein QUIRKY (1081 aa).

Residues 1-124 (MNTTPFHSDP…SRRGEEGLVY (124 aa)) form the C2 1 domain. 2 disordered regions span residues 154–198 (DTAG…MNIP) and 238–323 (PQHV…MEKK). Residues 163–176 (QQQQQQQQFHPPQQ) show a composition bias toward low complexity. Basic and acidic residues predominate over residues 248–257 (NHPHRNDNHP). Positions 258-268 (QRPPSPPPPPS) are enriched in pro residues. C2 domains follow at residues 318–440 (TTME…PQWY), 477–605 (SSDA…SKWH), and 652–778 (VCSD…TNSY). Positions 351, 352, 408, and 413 each coordinate Ca(2+). 3 helical membrane-spanning segments follow: residues 879–899 (WYRI…LDNI), 916–936 (LVLV…VVMI), and 1024–1044 (LFIA…AKMV).

It belongs to the MCTP family. In terms of assembly, interacts with SUB/SCM and POQ at the plasma membrane. Binds to SUB/SCM at plasmodesmata (PD) in root epidermal cells to promote tissue morphogenesis. Requires Ca(2+) as cofactor. As to expression, observed mainly in flowers, and, to a lower extent, in seedlings, roots, shoots, leaves, stems and inflorescences. Expressed in the vascular tissues of roots, cotyledons and rosette leaves. Accumulates in roots meristems.

Its subcellular location is the cell membrane. The protein resides in the cytoplasm. The protein localises to the golgi apparatus membrane. It is found in the cell junction. It localises to the plasmodesma. Functionally, may be involved in Ca 2(+)-dependent signaling and membrane trafficking. Plays a role in fruit dehiscence. Components of the machinery involved in organ development mediated by the receptor-like kinase STRUBBELIG (SUB). Collaboratively with SUB and POQ, regulates cell growth anisotropy during gynoecium development, thus linking together cell-cell communication and cellular growth. Together with SUB/SCM, links RLK-dependent signal transduction and intercellular communication mediated by plasmodesmata (PD) to regulate tissue morphogenesis. May function as a signaling molecule by regulating the trafficking of other regulators. In Arabidopsis thaliana (Mouse-ear cress), this protein is Protein QUIRKY.